The primary structure comprises 507 residues: MVTIRADEISNIIRERIEQYNREVKIVNTGTVLQVGDGIARIHGLDEVMAGELVEFEEGTIGIALNLESNNVGVVLMGDGLLIQEGSSVKATGRIAQIPVSEAYLGRVINALAKPIDGRGEISASEFRLIESAAPGIISRRSVYEPLQTGLIAIDSMIPIGRGQRELIIGDRQTGKTAVATDTILNQQGQNVICVYVAIGQKASSVAQVVTTLQERGAMEYTIVVAETADSPATLQYLAPYTGAALAEYFMYRERHTLIIYDDLSKQAQAYRQMSLLLRRPPGREAYLGDVFYLHSRLLERAAKLSSSLGEGSMTALPIVETQSGDVSAYIPTNVISITDGQIFLSADLFNSGIRPAINVGISVSRVGSAAQIKAMKQVAGKLKLELAQFAELEAFAQFASDLDKATQNQLARGQRLRELLKQSQSAPLTVEEQIMTIYTGTNGYLDSLEVGQVRKFLVELRTYLKTNKPQFQEIISSTKTFTEEAEALLKEAIQEQMDRFILQEQA.

170–177 contributes to the ATP binding site; that stretch reads GDRQTGKT.

This sequence belongs to the ATPase alpha/beta chains family. As to quaternary structure, F-type ATPases have 2 components, CF(1) - the catalytic core - and CF(0) - the membrane proton channel. CF(1) has five subunits: alpha(3), beta(3), gamma(1), delta(1), epsilon(1). CF(0) has four main subunits: a, b, b' and c.

It is found in the plastid. The protein localises to the chloroplast thylakoid membrane. The enzyme catalyses ATP + H2O + 4 H(+)(in) = ADP + phosphate + 5 H(+)(out). In terms of biological role, produces ATP from ADP in the presence of a proton gradient across the membrane. The alpha chain is a regulatory subunit. In Nicotiana tabacum (Common tobacco), this protein is ATP synthase subunit alpha, chloroplastic.